Consider the following 284-residue polypeptide: Nucleotide-binding protein Shewmr7_3352 (284 aa).

Residue 8-15 coordinates ATP; it reads GRSGSGKS. 56–59 contributes to the GTP binding site; the sequence is DVRN.

Belongs to the RapZ-like family.

Functionally, displays ATPase and GTPase activities. This Shewanella sp. (strain MR-7) protein is Nucleotide-binding protein Shewmr7_3352.